The primary structure comprises 440 residues: WAS/WASL-interacting protein family member 2 (440 aa).

Over residues 1 to 18 (MPIPPPPPPPPGPPPPPT) the composition is skewed to pro residues. A disordered region spans residues 1-36 (MPIPPPPPPPPGPPPPPTFHQANTEQPKLSRDEQRG). One can recognise a WH2 domain in the interval 36-53 (GRGALLQDICKGTKLKKV). The residue at position 37 (R37) is an Asymmetric dimethylarginine. The binds actin stretch occupies residues 49–52 (KLKK). Disordered regions lie at residues 56-387 (INDR…DSIT) and 419-440 (RIYP…PILR). The span at 116 to 133 (PSSRAAAPRPPVSAASGR) shows a compositional bias: low complexity. Residues 161–172 (RPNTTSSTGMKH) are compositionally biased toward polar residues. Composition is skewed to pro residues over residues 176 to 193 (APPP…PTPL), 222 to 236 (EGPP…PPSP), 249 to 262 (APPP…PGVP), and 356 to 378 (RGKP…PPPL).

The protein belongs to the verprolin family. Interacts with WASL and WASP, and this interaction results in cytoplasmic relocation of these two proteins along actin filaments. Interacts with NCK2 resulting in the localization to sites of focal adhesions. No interaction was seen with WASF2 and WASF3. As to expression, expressed mainly in brain, colon, lung and stomach (at protein level). Ubiquitously expressed, with high expression in brain, kidney, lung, and placenta.

It localises to the cytoplasm. Its subcellular location is the cytoskeleton. Its function is as follows. Plays an active role in the formation of cell surface protrusions downstream of activated PDGFB receptors. Plays an important role in actin-microspike formation through cooperation with WASL. May cooperate with WASP and WASL to induce mobilization and reorganization of the actin filament system. The polypeptide is WAS/WASL-interacting protein family member 2 (WIPF2) (Homo sapiens (Human)).